The primary structure comprises 6061 residues: MFESLVADIIAKYIGEYIKNLSSEQLKINVFSGNVVLKNLEIKGEALQSFKLPLHVQKGIIGTLTLKIPWTNLKSSPVIFDIDCISLYAIPQTGFDYNEEEEKKNQLELKRKKLEKFELIRSFKEGSGADQKTTKQDTFMTSVMTKILNNIQVKIQSFHLRYEEIKGGKVYSLGISFGSLSAFPTDSNWGQSLNENNQQQQQHHQSSLFKYIELTNFSIYLDSEDKKESISKMVEKNDNQLFSNTLKSMIGTTQDTYSKHQYILKPITVRLKIELNRNLDMNIDIPRMKVYCQFDQVSFVIEENQYQSILKLLTTIGNYAQEIKYLKYRPKQRPKQDPKAWWKYVGDVVRESIREKIQQRSWTFIQKRRQNRKEYIKLFKKLQNVDWMEPINEQELKQLSEMEEVHLSFEDIIYFRSLARRELAMETAIADSKKGEFYSSLNRANTSVKQGFFGSWSSWATGNKDSTSSSSSSSSTLPRMNIQLTKEQQAEIEKSMEYDEITLGATIEMPPHYVVNVFEVQIDAVIFTIIGNRGPSENPLIKSYLNNINFKLQQREQGLKLELDLESFNVSDNNNKNNNSLFPYVVTSNPKYKRHQENKENKENQENQENENKNEINNNNNNKKKDNNLFHIIFESKPINSNYDYALSLMLKSLEIIINKQQIERLVEFATPKENVNLFSLSSAALEEFILLKEMTIFQLREVVNHHKTIDLFIDAKAPILIIPEHMYINNNNNNNNENSDNNSSIDTNLIILDLGNFLMQSDISKKPRKSNYSIETPFILNEQITKLIDSQTENELDDNTVDIKNSDNNNNNISDNINNNNNINNKNNINNNKEIEEDDLKISDLYDHYRASLSSIKVLLATHSQDWYLPDENNSKGYQLIEEMSINLHIQSCIEPNELSLSMFKVSGILPQVKVNLSDSSYLKLYHIAKTLGRIHSKTTNTTITAYNHIMDMYSNTQDTFVQQVDAKTTEIKLSDQYKQVLSKRKIFDARFKLEKVLVNIISNQSKLLQLRIGDLQVSLKKKTYDYNGNLLLGSLEVEDCQETCERFNCLITSNSRLLPIIQNNNNNNNNNNNNNNNNNNESCLQLNNNINSSSSLISIHTEMVDRESPHYKLVDTLVDFSFGELNFNYNPKSMGKIICFLDYCFEETFKIQEKFIDQLGNGSTLSNLFHLQSSTPTTPLLESTSQQPLTNPLSKSTLVNNNNNNSNNRVVYNNNNNNIIKAKASIYSLSISLNEEGRELGRFSINQFAIEECTISGRSLDVSGYLESISIDSFLDHPTEGFKILTPKNPGVSMANFKYSTYDNSSSGGGGGGSIINKNKQSLSSSSLPQVEGHQSTQFDKEIQLYLRSIRLTVLVDFILKTKHLIELPFKTVKYDSLYKYQQQQQQQQEEEQQQKEEEQHGGEFDLQNVSSSSPQVKVIDIIGSDQQPIGFKPLKINYKVFLESPQIILSSSDDIHSNHDRIIAELGSVDIKTTILKTNHLIKDSSSSSSSSNSGDCGNEKEIQVQWESIEANLYDMNIRTFKNGQYHQVLHNLSIFNRIDTVLCDGDGKYISFAKLPNQKKINVSIKEIKIEFMDLEHSLILSLTKDVINRITSSLGNNSSNNKLVKSKSSSLSSSTKLLPQLNNDNNNNNNNTNNGTLSSSTSTLFVNTDKEHLTTSINVGIDKFQLILKLDQEKQQQQQQKDHDNDENIIINNDFVTIQLDKISVEMESCKRNDVKTLIKVDDFILLDDRLSDNLRFNKIVEKKKNDNGIGKDEPLINIEFINFKDNNDWESSAIIEFREARVVLSLGLILGIKDFFLLPFVTTLPNEQQQLLLNGNSNQIEIPILSNVLQDLKSILIESTVNNNNNNNNNGDGSSGSKIKKSSKLKLELIAHSPQILLPVSNHSNKLVALDINGDVKLTNSFSPTQIKSFIDSNFYDEFDVESMFITLNGLTFNIYEITTATTTTTTTNNNYSDIKFLSSISKESFDIKVDYSSWDSIYTNTIEMLTCGKQPTIVDVDIFNTFSMRVNEEQYQFFCDMIAHLLRSMDDCPKLKLKKRNPYMLDVLLDQISLLKSTNSTTTTTTISNSLLELKVLEIFGMKVNCKFDKVLIELLSNDGNNNDFSTLILENVLLSIDMATENRPKKMLIEGTVDQLLVYDKRDSDKNSNGRLVLERYSNNNPMMEFSQLMYQSNSPYFPKGQLYSSLLNFNLNHLKAIALPSFSLRVWDWVILTITSVFNTYTIDKYNPINNNNNNNNDDDDIIINNNINNNNSNNINRMKMIVNIPLPIIVLIDESPSLSSLSKQHCNHGKVFVEIKPKSIQISNEFITKVSLGILNSLGNQDNYQDVMNIYLNEFEMNLLTHNGIAESNILKNGNLLVSMENFIQEHQDQNYQTIELTPTSKFTIKTFTSENNDNGILSFKFDQTQYNHFYKCINSVLKRQYEMDSKCNQIYLKPNHKLKPIDMITIINLDCLELLLLSDDDNDGGDGLMDSSVDNVQSEIRIFNLSLENIINSRDETMQVVGLIGNLKVIDSVNQIVIIEPINSNVDRFFTMFKYKTYSRSLKQRQKHLQQLLEDPSLQWDVEFEFNMKSVQFNLSLPNINVPLSIQPFLLSILEKYPIETKSKVQSTLDELSIAEQPPKMKIDINLLYSKVLISPSGKSFTSILTNSSTNISGYDYMVVSFDEVSMKHQPNQFIKLDDLGTIIMDLESINYKVSSLSVEIVLVNKKPYFFLTDIDINASQRTIRNHLEIVNKLHWDGQTNQNNQKNRNPFKFYDQSGASNNNNDNDNDEYDEDQEEISEIYKDQELISKSKISIHSNASQIDLHSNHFQFLWTLYQSIGDIKLNKDQDDDDEDNQEKQNKEKKSNIIGGDKEYLLNFIEFQLKDVKINLINQFNNPILNISLSHLETYLRQIENGSIKLDGSIHSLKILDQRRESTLNSKYKYLLQNYGVDGNSSHNSSGGLNNSFDLNNSGGGNNNNNNSSTKSNILKFSFKPWIYKEDIDDPLFSRNNSSNSINSIENVSITTTTPPPPPSTLPKEFKDKWDQHLIISISNSQITPIFDLFTEIQTSFLPSDLLNKHKENEQDKGGKKSSRIKIDLTMESNQFILPMNFEISNYYLRNEIRKMTISNDYQIIKYFDSSDHHHHQKESSIDSNLMFLEITGFSIDSIMSVLIDSNLPRVNRILRDSNININTRIIDWSSSSSSSKPIKIPSIDTIIDIEHMDFLFCNEEYRFMYDTFNNTLKRYYDFKFLPLPPYKEIDYSFNELISIENQVKCTIQSITMNMLNRQKPNTLATSNNHNHHNSNGTIKPIGQIFLKKLSIDMITCKQNMKLNGTINSMFIRSIKTKENKQSLYLDILKPKYNFNENDIEIENKLNRNSNSDSDNEENHNNNQNNQNNIDDDDGDGDDDDDDDDSIIKFEFISYSEPTSIKGDKSPIKTLWDTQYSVEIGSINLVSKIATLLKIKDFIMEPMVTPFSSAPSNKPSIRDSKDYRSKMYQRLTMKPFTLEIPQSETSTEMVSIEFGTITMSNIYRLFHNNNITINKQIEVLLVDISQFTMYTQRDILSTMVSNSPQMKLEVERLLTLEDRSLQDFKTRAKITNFELIFSADDYLFLYTIFTGNWMFNDEVDSSSHRTPPNPPSLPSWNGVRFVYSPLEHSEQIKVSENQFSSPKGFINLVENRILQSFTLSMDTFNFHMNPIVDPLAILAMNNVILDYNLYRDGIMKTSINLKDVLLLDERNNTDCVFKEILTRKQLNNQNPKTPPHIIIDFLMDPTHNRQFTSIQLDHPMLFVSPNSILPILDFFTSLQQQKEKELQESQQKLQQKLQQKQQHQQQHQQQQQQQQQQQQQQQQQQQQQQQQQQQQQQQQQPIINGDYGGIDSNNRNKKLPPHIRFYLKVTKPKLLLVEDETQQNTNALVMKMPIEFHFSKTSDLNQTMELHASKCQLFRTTPFSDSNNGATSTPITNSFAFTCIFIQFNENDQQTIQIRFQPLNVCLSYKEILMINRLINNLSLTNYQEQLKQQQQQEKEKEIEKERKRKSLLKNNNNISINDNDDDDDDDDNDNDENNNENYEFNFKNNNNEEFYDDFDELTDTTTTSSQRLNEQDKEEIRIQKSFRELEKKKRERKENSKSKSLVAPDRPDESMNLMHKTRVHVEFLGRVSFTLLDESVTMKDIPFVQLNIGEFNSDYWGWEEYSFLSCDMYLKVEVFNQKHMAFDSLVEQFQLNVQVLQSDDPKLKISVKSNSPCNINISQPFIQALANFYQNILKTNASNSSNNNNNNNNNGLSASTSNNLNNTMNDSNNNYNGRNASSNELITFENVDPEEMLFNSISQSISNPNLTTTTTTTTTTTTTTTTSTTINNNNNNNINQFQITTPSSSVINSPNISGINVGSNRSTKNSINHKRNPSLNNNNNNNNNNNNNNNNNNNNNNNNNNNNNNNSNDNQVNFSTSPGWKKPINSGYLHQFDCYNSLTNNIINSKTRDMRSSVDLTMLTRSGASHQRSSHQRSHSRANSNTFNMEMLRSPPVLSSSPTGTSSIPNVLSSSSLNAQTLFTTEGNNQFWIVNLTGKSIEYYVEELNFVQSYSVNDSGSGINNNNNNNNIYNIINLNNSTSSPSSSSNKVNNNYNNMDDEEDKKISKKSLSSSTDKEIHLLRDKEKQALELNSVLFKTRDFRAHGSLNAHVAIRLIDQDSGPSQWIHGVSINQIGDNFYFPPFGNKANLVVCEVGWDEKNESKIATLRSPVLIKNSSNTPIDIQLIHTINNNNNNNNNDVNNNNTNNNNNNNNNNNNNKSNENSQDQPPSIKTQEFGPIRIDENFYIPIDFWNYNCSISIRPHGKDFKFDSIETLELCESSSWPDSHIFTSTKDLINENNAGGSSHYSSNGSNGSFSSISQQQQQKKTENFYLGTMKQSGIRCDRTGLVSTTLIVTPPIIFENVLLCDIEVRIMSHSKRSKVNDTFLKNLVNNGKPATTLSPGKQMPWYSNHGNDVGMTLSLKGLGKDQYFHLPSYIHNSPLATKGKDNNKDNSNNNNNNNNNNNDGIEVGSGLIGGGIDSNSFQHVSFTQEIQFVCTPEYTNTNYTLILKIDHRFEGGCHIASIYCTNAIQNHTMIPFLLRPSNMKLVNALTLETNGDPLMISHDKFYCYHPSAPKIPSKEFDIILGKEDIIEIQFDASKDQMRFQFKAIVSTGFNIFFRTRIVDIYPRFVLVNKLPISLSYTQVNKDLAIMAKDSQLLGPESSIPFHWFNGKEEQQLSISIGQGTSDSSWKWSGGMRIDQIGVNYIKLQHQHDDLIEQSIKVEVRDTSESTMVYFYSNDPQNLPFHIKNETKTIISYQQKHPNSKKYTLKPNEDRYFTWDFPSGERKLTVHYHNDGGINIGNLNNSLNNINNNNNNLNNDNNKNKNNNDKNKNNDKNNKNNNDKNNNDNNNNNNNNNNENQNIGQDTSPIITQDINLNKIKVFKPVKLLKEEIFPIVESSNGTTRDLLFTTKHRVTKELDTLEFAFDISFENLGFSFIDDVPQELIYVAFKDFNFWTSQSNLTETTWLIIDDIQIDNQQPDTDYPVLLWCDKKKESQALPFLEYSAVKMKKKNLKYYDLIALYLNEMYIQLDDKTLLDLNNFYQKIPIHKFNGTIYVDPTSSPSSPQQQQPQTEQPGIIPENFYIKWLIFAEIKIYLTFGISRDGILSNYNKMPALRLVIPSLGKSLGQLENAPLNINQLGVKNIFTTMNNLTQLLSSHYTKQMKRQIHVILGSSNIFGSPLVFFNNISTGMTEAIEDPIMGSIQLMKRILYAAANSSSKLFGTISSGFATWSLDETYLRRRDAEEKVKAKHIAHGFYLGSKGFAMGIIDGVFGIVEHPVRGAMQEGLLGFFKGCGKGVLGIAVKPVTGVFDFASKTSEGIRNNTNIHPERFRLRTPRFINPREPIKEYSVDESEGNFLLKKNSDDINKSEGNPLSSKMEYKFHVVLPDCTLLLTSHSLICLSKKGIYRWSFPLSEISKLVNIVAKCKLNIHLKNYRSFGTFSQLRKKISIHCPNDSILFQLYSKISSCFNRSNRLELEENVADDFGDNSIAMVSRYN.

Residues 2–115 form the Chorein N-terminal domain; sequence FESLVADIIA…QLELKRKKLE (114 aa). 17 disordered regions span residues 590 to 623, 803 to 828, 1386 to 1414, 1604 to 1644, 2747 to 2784, 2950 to 2972, 3364 to 3401, 3855 to 3876, 4011 to 4068, 4107 to 4132, 4262 to 4297, 4321 to 4442, 4601 to 4631, 4753 to 4797, 4861 to 4882, 5003 to 5030, and 5372 to 5429; these read PKYK…NNNK, DIKN…NNKN, QQQQ…NVSS, SSNN…GTLS, QTNQ…EDQE, GLNN…NSST, LNRN…DDDD, QQQQ…RNKK, QQQQ…FKNN, ELEK…RPDE, NSSN…YNGR, SQSI…TSPG, TSSP…KKSL, NNNN…TQEF, NAGG…SISQ, LATK…DGIE, and NINN…IGQD. Residues 595-614 are compositionally biased toward basic and acidic residues; it reads HQENKENKENQENQENENKN. A compositionally biased stretch (basic and acidic residues) spans 1395-1406; it reads QQQKEEEQHGGE. Polar residues predominate over residues 2747–2756; sequence QTNQNNQKNR. Acidic residues predominate over residues 2774 to 2784; that stretch reads NDNDEYDEDQE. A compositionally biased stretch (acidic residues) spans 3388-3401; the sequence is IDDDDGDGDDDDDD. Over residues 4015 to 4024 the composition is skewed to basic and acidic residues; it reads QEKEKEIEKE. A compositionally biased stretch (low complexity) spans 4031–4040; it reads LKNNNNISIN. Positions 4041–4057 are enriched in acidic residues; it reads DNDDDDDDDDNDNDENN. Residues 4058 to 4068 are compositionally biased toward low complexity; sequence NENYEFNFKNN. Positions 4107–4120 are enriched in basic and acidic residues; sequence ELEKKKRERKENSK. 2 stretches are compositionally biased toward low complexity: residues 4330–4383 and 4399–4429; these read TTTT…VGSN and NNNN…NNNN. Residues 4430–4441 show a composition bias toward polar residues; the sequence is SNDNQVNFSTSP. Composition is skewed to low complexity over residues 4601–4617 and 4753–4784; these read TSSP…NYNN and NNNN…SNEN. Positions 4785-4794 are enriched in polar residues; the sequence is SQDQPPSIKT. Composition is skewed to low complexity over residues 5013 to 5030 and 5372 to 5384; these read DNSN…DGIE and NINN…NNDN. Basic and acidic residues predominate over residues 5385-5409; sequence NKNKNNNDKNKNNDKNNKNNNDKNN. Over residues 5410 to 5421 the composition is skewed to low complexity; the sequence is NDNNNNNNNNNN.

This sequence belongs to the VPS13 family.

It localises to the membrane. Mediates the transfer of lipids between membranes at organelle contact sites. The protein is Intermembrane lipid transfer protein vps13B (vps13B) of Dictyostelium discoideum (Social amoeba).